The sequence spans 211 residues: Thymidylate kinase (211 aa).

Position 11 to 18 (11 to 18 (GPDGAGKT)) interacts with ATP.

Belongs to the thymidylate kinase family.

The catalysed reaction is dTMP + ATP = dTDP + ADP. In terms of biological role, phosphorylation of dTMP to form dTDP in both de novo and salvage pathways of dTTP synthesis. This is Thymidylate kinase from Streptococcus pyogenes serotype M18 (strain MGAS8232).